The chain runs to 215 residues: Adenylate kinase (215 aa).

10-15 lines the ATP pocket; it reads GAGKGT. An NMP region spans residues 30–58; sequence STGDMLREAKRSGTLEKRYLDIMDSGGLL. Residues Thr31, Arg36, 56–58, 84–87, and Gln91 each bind AMP; these read GLL and GFPR. The segment at 128–158 is LID; the sequence is HRRTDKRSGQIYHLVYNPPPPGAELEHRADD. Residues Arg129 and 138-139 contribute to the ATP site; that span reads IY. Residues Arg155 and Arg166 each coordinate AMP. Residue Gly194 participates in ATP binding.

The protein belongs to the adenylate kinase family. As to quaternary structure, monomer.

The protein resides in the cytoplasm. The catalysed reaction is AMP + ATP = 2 ADP. Its pathway is purine metabolism; AMP biosynthesis via salvage pathway; AMP from ADP: step 1/1. In terms of biological role, catalyzes the reversible transfer of the terminal phosphate group between ATP and AMP. Plays an important role in cellular energy homeostasis and in adenine nucleotide metabolism. This chain is Adenylate kinase, found in Sorangium cellulosum (strain So ce56) (Polyangium cellulosum (strain So ce56)).